A 416-amino-acid polypeptide reads, in one-letter code: Formyl-CoA:oxalate CoA-transferase (416 aa).

Residues 17-18 (QS), arginine 38, 72-75 (LNTK), 96-98 (NFH), histidine 104, and 137-140 (KAYE) each bind CoA. Aspartate 169 functions as the Nucleophile in the catalytic mechanism. Residue 248 to 250 (GGQ) coordinates substrate. 273–275 (QEQ) is a CoA binding site.

Belongs to the CoA-transferase III family. Frc subfamily. In terms of assembly, homodimer.

The enzyme catalyses formyl-CoA + oxalate = oxalyl-CoA + formate. It functions in the pathway metabolic intermediate degradation; oxalate degradation; CO(2) and formate from oxalate: step 1/2. Its function is as follows. Involved in the catabolism of oxalate and in the adapatation to low pH via the induction of the oxalate-dependent acid tolerance response (ATR). Catalyzes the transfer of the CoA moiety from formyl-CoA to oxalate. The polypeptide is Formyl-CoA:oxalate CoA-transferase (Escherichia coli O81 (strain ED1a)).